A 303-amino-acid polypeptide reads, in one-letter code: Elongation factor Ts (303 aa).

Positions T80–V83 are involved in Mg(2+) ion dislocation from EF-Tu.

Belongs to the EF-Ts family.

The protein localises to the cytoplasm. Associates with the EF-Tu.GDP complex and induces the exchange of GDP to GTP. It remains bound to the aminoacyl-tRNA.EF-Tu.GTP complex up to the GTP hydrolysis stage on the ribosome. The chain is Elongation factor Ts from Clostridium botulinum (strain Eklund 17B / Type B).